The primary structure comprises 606 residues: Aspartate--tRNA(Asp/Asn) ligase (606 aa).

Glutamate 177 is an L-aspartate binding site. The segment at 201 to 204 is aspartate; sequence QLFK. Residue arginine 223 participates in L-aspartate binding. Residues 223–225 and glutamine 232 contribute to the ATP site; that span reads RDE. An L-aspartate-binding site is contributed by histidine 461. Glutamate 499 lines the ATP pocket. Arginine 506 contacts L-aspartate. 551 to 554 contributes to the ATP binding site; the sequence is GLDR.

Belongs to the class-II aminoacyl-tRNA synthetase family. Type 1 subfamily. Homodimer.

It is found in the cytoplasm. It carries out the reaction tRNA(Asx) + L-aspartate + ATP = L-aspartyl-tRNA(Asx) + AMP + diphosphate. In terms of biological role, aspartyl-tRNA synthetase with relaxed tRNA specificity since it is able to aspartylate not only its cognate tRNA(Asp) but also tRNA(Asn). Reaction proceeds in two steps: L-aspartate is first activated by ATP to form Asp-AMP and then transferred to the acceptor end of tRNA(Asp/Asn). This is Aspartate--tRNA(Asp/Asn) ligase from Prochlorococcus marinus (strain NATL2A).